The sequence spans 234 residues: Glutathione S-transferase sirG (234 aa).

The region spanning 15–99 is the GST N-terminal domain; the sequence is LYVVKATPTS…YLTDAYDHEG (85 aa). Positions 105–230 constitute a GST C-terminal domain; that stretch reads DLWERTQVNN…KALSQKFRPS (126 aa).

The protein belongs to the GST superfamily.

It carries out the reaction RX + glutathione = an S-substituted glutathione + a halide anion + H(+). It functions in the pathway mycotoxin biosynthesis. Glutathione S-transferase; part of the gene cluster that mediates the biosynthesis of sirodesmin PL, an epipolythiodioxopiperazine (ETP) characterized by a disulfide bridged cyclic dipeptide and that acts as a phytotoxin which is involved in the blackleg didease of canola. SirD catalyzes the O-prenylation of L-tyrosine (L-Tyr) in the presence of dimethylallyl diphosphate (DMAPP) to yield 4-O-dimethylallyl-L-Tyr, and therefore represents probably the first pathway-specific enzyme in the biosynthesis of sirodesmin PL. 4-O-dimethylallyl-L-Tyr, then undergoes condensation with L-Ser in a reaction catalyzed by the non-ribosomal peptide synthase sirP to form the diketopiperazine (DKP) backbone. Further bishydroxylation of the DKP performed by the cytochrome P450 monooxygenase sirC leads to the production of the intermediate phomamide. This step is essential to form the reactive thiol group required for toxicity of sirodesmin PL. The next steps of sirodesmin biosynthesis are not well understood yet, but some predictions could be made from intermediate compounds identification. Phomamide is converted into phomalizarine via oxidation, probably by sirT. Further oxidation, methylation (by sirM or sirN) and reduction steps convert phomalizarine to deacetyl sirodesmin. Finally, acetyltransferase sirH probably acetylates deacetyl sirodesmin to produce sirodesmin PL. The sequence is that of Glutathione S-transferase sirG from Leptosphaeria maculans (Blackleg fungus).